The following is a 156-amino-acid chain: Ribosomal RNA large subunit methyltransferase H (156 aa).

Residues leucine 73, glycine 104, and leucine 123 to leucine 128 contribute to the S-adenosyl-L-methionine site.

Belongs to the RNA methyltransferase RlmH family. As to quaternary structure, homodimer.

It localises to the cytoplasm. The enzyme catalyses pseudouridine(1915) in 23S rRNA + S-adenosyl-L-methionine = N(3)-methylpseudouridine(1915) in 23S rRNA + S-adenosyl-L-homocysteine + H(+). Functionally, specifically methylates the pseudouridine at position 1915 (m3Psi1915) in 23S rRNA. This chain is Ribosomal RNA large subunit methyltransferase H, found in Thiobacillus denitrificans (strain ATCC 25259 / T1).